Reading from the N-terminus, the 144-residue chain is 3-hydroxyacyl-[acyl-carrier-protein] dehydratase FabZ (144 aa).

The active site involves histidine 51.

This sequence belongs to the thioester dehydratase family. FabZ subfamily.

Its subcellular location is the cytoplasm. The enzyme catalyses a (3R)-hydroxyacyl-[ACP] = a (2E)-enoyl-[ACP] + H2O. Involved in unsaturated fatty acids biosynthesis. Catalyzes the dehydration of short chain beta-hydroxyacyl-ACPs and long chain saturated and unsaturated beta-hydroxyacyl-ACPs. In Clostridium botulinum (strain Okra / Type B1), this protein is 3-hydroxyacyl-[acyl-carrier-protein] dehydratase FabZ.